The primary structure comprises 207 residues: Nitrophorin-1 (207 aa).

Positions 1 to 23 are cleaved as a signal peptide; it reads MKSYTALLAVAILCLFAAVGVSG. Intrachain disulfides connect Cys-25–Cys-145 and Cys-64–Cys-194. Heme is bound at residue His-82.

The protein belongs to the calycin superfamily. Nitrophorin family. Salivary gland (at protein level).

It is found in the secreted. Functionally, heme-based protein that deliver nitric oxide gas (NO) to the victim while feeding, resulting in vasodilation and inhibition of platelet aggregation. Reversibly binds nitric oxide (NO). Also binds tightly to histamine, which is released by the host to induce wound healing. In Rhodnius prolixus (Triatomid bug), this protein is Nitrophorin-1.